The sequence spans 91 residues: DNA-directed RNA polymerase subunit omega (91 aa).

The protein belongs to the RNA polymerase subunit omega family. The RNAP catalytic core consists of 2 alpha, 1 beta, 1 beta' and 1 omega subunit. When a sigma factor is associated with the core the holoenzyme is formed, which can initiate transcription.

The catalysed reaction is RNA(n) + a ribonucleoside 5'-triphosphate = RNA(n+1) + diphosphate. Functionally, promotes RNA polymerase assembly. Latches the N- and C-terminal regions of the beta' subunit thereby facilitating its interaction with the beta and alpha subunits. This chain is DNA-directed RNA polymerase subunit omega, found in Yersinia enterocolitica serotype O:8 / biotype 1B (strain NCTC 13174 / 8081).